The chain runs to 295 residues: GTP cyclohydrolase FolE2 (295 aa).

The protein belongs to the GTP cyclohydrolase IV family.

It carries out the reaction GTP + H2O = 7,8-dihydroneopterin 3'-triphosphate + formate + H(+). The protein operates within cofactor biosynthesis; 7,8-dihydroneopterin triphosphate biosynthesis; 7,8-dihydroneopterin triphosphate from GTP: step 1/1. In terms of biological role, converts GTP to 7,8-dihydroneopterin triphosphate. The chain is GTP cyclohydrolase FolE2 from Pseudomonas putida (strain W619).